We begin with the raw amino-acid sequence, 94 residues long: Small ribosomal subunit protein uS19 (94 aa).

Belongs to the universal ribosomal protein uS19 family.

Its function is as follows. Protein S19 forms a complex with S13 that binds strongly to the 16S ribosomal RNA. The sequence is that of Small ribosomal subunit protein uS19 from Dictyoglomus turgidum (strain DSM 6724 / Z-1310).